The sequence spans 362 residues: 2-aminoethylphosphonate--pyruvate transaminase (362 aa).

At Lys193 the chain carries N6-(pyridoxal phosphate)lysine.

This sequence belongs to the class-V pyridoxal-phosphate-dependent aminotransferase family. PhnW subfamily. In terms of assembly, homodimer. Pyridoxal 5'-phosphate is required as a cofactor.

The catalysed reaction is (2-aminoethyl)phosphonate + pyruvate = phosphonoacetaldehyde + L-alanine. In terms of biological role, involved in phosphonate degradation. The protein is 2-aminoethylphosphonate--pyruvate transaminase of Bacteroides fragilis (strain ATCC 25285 / DSM 2151 / CCUG 4856 / JCM 11019 / LMG 10263 / NCTC 9343 / Onslow / VPI 2553 / EN-2).